The sequence spans 403 residues: L-cysteine:1D-myo-inositol 2-amino-2-deoxy-alpha-D-glucopyranoside ligase (403 aa).

C43 is a binding site for Zn(2+). L-cysteinyl-5'-AMP contacts are provided by residues 43–46, T58, and 81–83; these read CGIT and NTT. The 'HIGH' region motif lies at 45 to 55; the sequence is ITPYDATHLGH. Residues 183-188 carry the 'ERGGDP' region motif; that stretch reads ERGGDP. L-cysteinyl-5'-AMP is bound at residue W223. C227 serves as a coordination point for Zn(2+). 245–247 is a binding site for L-cysteinyl-5'-AMP; that stretch reads GSD. Residue H252 participates in Zn(2+) binding. V279 contacts L-cysteinyl-5'-AMP. A 'KMSKS' region motif is present at residues 285-289; the sequence is KMSKS.

This sequence belongs to the class-I aminoacyl-tRNA synthetase family. MshC subfamily. In terms of assembly, monomer. It depends on Zn(2+) as a cofactor.

It carries out the reaction 1D-myo-inositol 2-amino-2-deoxy-alpha-D-glucopyranoside + L-cysteine + ATP = 1D-myo-inositol 2-(L-cysteinylamino)-2-deoxy-alpha-D-glucopyranoside + AMP + diphosphate + H(+). Catalyzes the ATP-dependent condensation of GlcN-Ins and L-cysteine to form L-Cys-GlcN-Ins. This Thermobispora bispora (strain ATCC 19993 / DSM 43833 / CBS 139.67 / JCM 10125 / KCTC 9307 / NBRC 14880 / R51) protein is L-cysteine:1D-myo-inositol 2-amino-2-deoxy-alpha-D-glucopyranoside ligase.